We begin with the raw amino-acid sequence, 378 residues long: Succinyl-diaminopimelate desuccinylase (378 aa).

Zn(2+) is bound at residue H68. The active site involves D70. D101 contacts Zn(2+). The active-site Proton acceptor is the E135. 3 residues coordinate Zn(2+): E136, E164, and H350.

The protein belongs to the peptidase M20A family. DapE subfamily. In terms of assembly, homodimer. The cofactor is Zn(2+). Co(2+) is required as a cofactor.

The catalysed reaction is N-succinyl-(2S,6S)-2,6-diaminopimelate + H2O = (2S,6S)-2,6-diaminopimelate + succinate. It participates in amino-acid biosynthesis; L-lysine biosynthesis via DAP pathway; LL-2,6-diaminopimelate from (S)-tetrahydrodipicolinate (succinylase route): step 3/3. In terms of biological role, catalyzes the hydrolysis of N-succinyl-L,L-diaminopimelic acid (SDAP), forming succinate and LL-2,6-diaminopimelate (DAP), an intermediate involved in the bacterial biosynthesis of lysine and meso-diaminopimelic acid, an essential component of bacterial cell walls. This chain is Succinyl-diaminopimelate desuccinylase, found in Vibrio atlanticus (strain LGP32) (Vibrio splendidus (strain Mel32)).